Reading from the N-terminus, the 387-residue chain is Ferrochelatase (387 aa).

Residues H196 and E277 each contribute to the Fe cation site.

Belongs to the ferrochelatase family.

The protein resides in the cytoplasm. It carries out the reaction heme b + 2 H(+) = protoporphyrin IX + Fe(2+). The protein operates within porphyrin-containing compound metabolism; protoheme biosynthesis; protoheme from protoporphyrin-IX: step 1/1. Functionally, catalyzes the ferrous insertion into protoporphyrin IX. This chain is Ferrochelatase, found in Gloeothece citriformis (strain PCC 7424) (Cyanothece sp. (strain PCC 7424)).